We begin with the raw amino-acid sequence, 247 residues long: MQYNFKVEAFEGPLDLLLHLIHRYEIDIYNIPVADITEQYLSYVHTMKELQLDVASEYLVMAATLLQIKSKMLLPKHEEDVLDNGDDFIDDPRQELMERLIEYKKYKQVATELKEREQERAQLYTRPPIDFTSLQQEEETSLPLDVTLYDMLAAFQKLMRRKKAKKPVTTRITRQEIPIEQRMTDILKQLKIKGGRQSFYDLFVDDEREIMVVTFLAVLELMKNQQIIIEQEHNFDEIFVSSSNKSA.

The protein belongs to the ScpA family. Component of a cohesin-like complex composed of ScpA, ScpB and the Smc homodimer, in which ScpA and ScpB bind to the head domain of Smc. The presence of the three proteins is required for the association of the complex with DNA.

The protein localises to the cytoplasm. In terms of biological role, participates in chromosomal partition during cell division. May act via the formation of a condensin-like complex containing Smc and ScpB that pull DNA away from mid-cell into both cell halves. The sequence is that of Segregation and condensation protein A from Bacillus cereus (strain G9842).